We begin with the raw amino-acid sequence, 208 residues long: Small ribosomal subunit protein uS4 (208 aa).

Residues glutamine 98–isoleucine 161 enclose the S4 RNA-binding domain.

The protein belongs to the universal ribosomal protein uS4 family. In terms of assembly, part of the 30S ribosomal subunit. Contacts protein S5. The interaction surface between S4 and S5 is involved in control of translational fidelity.

One of the primary rRNA binding proteins, it binds directly to 16S rRNA where it nucleates assembly of the body of the 30S subunit. Functionally, with S5 and S12 plays an important role in translational accuracy. The chain is Small ribosomal subunit protein uS4 from Campylobacter fetus subsp. fetus (strain 82-40).